Reading from the N-terminus, the 438-residue chain is Aspartate--tRNA(Asp) ligase (438 aa).

Position 170 (Glu-170) interacts with L-aspartate. The aspartate stretch occupies residues 192–195 (QLYK). Arg-214 lines the L-aspartate pocket. ATP contacts are provided by residues 214–216 (RAE), 222–224 (RHL), and Glu-361. The Mg(2+) site is built by Glu-361 and Ser-364. L-aspartate contacts are provided by Ser-364 and Arg-368. 409-412 (GAER) lines the ATP pocket.

The protein belongs to the class-II aminoacyl-tRNA synthetase family. Type 2 subfamily. In terms of assembly, homodimer. Mg(2+) serves as cofactor.

The protein resides in the cytoplasm. It catalyses the reaction tRNA(Asp) + L-aspartate + ATP = L-aspartyl-tRNA(Asp) + AMP + diphosphate. Its function is as follows. Catalyzes the attachment of L-aspartate to tRNA(Asp) in a two-step reaction: L-aspartate is first activated by ATP to form Asp-AMP and then transferred to the acceptor end of tRNA(Asp). The chain is Aspartate--tRNA(Asp) ligase from Pyrococcus horikoshii (strain ATCC 700860 / DSM 12428 / JCM 9974 / NBRC 100139 / OT-3).